The primary structure comprises 899 residues: Bifunctional uridylyltransferase/uridylyl-removing enzyme (899 aa).

Residues 1 to 342 (MPQMDPELFD…RAGESGPATP (342 aa)) are uridylyltransferase. The tract at residues 343–705 (LNSRFQVRDG…TTQREFEGGT (363 aa)) is uridylyl-removing. Residues 461-583 (VDAHTLNLIK…VGDQTHLDYL (123 aa)) form the HD domain. ACT domains follow at residues 706–784 (QIFI…DEYP) and 816–897 (ILEL…SLQI).

It belongs to the GlnD family. Mg(2+) serves as cofactor.

It carries out the reaction [protein-PII]-L-tyrosine + UTP = [protein-PII]-uridylyl-L-tyrosine + diphosphate. It catalyses the reaction [protein-PII]-uridylyl-L-tyrosine + H2O = [protein-PII]-L-tyrosine + UMP + H(+). Its activity is regulated as follows. Uridylyltransferase (UTase) activity is inhibited by glutamine, while glutamine activates uridylyl-removing (UR) activity. Modifies, by uridylylation and deuridylylation, the PII regulatory proteins (GlnB and homologs), in response to the nitrogen status of the cell that GlnD senses through the glutamine level. Under low glutamine levels, catalyzes the conversion of the PII proteins and UTP to PII-UMP and PPi, while under higher glutamine levels, GlnD hydrolyzes PII-UMP to PII and UMP (deuridylylation). Thus, controls uridylylation state and activity of the PII proteins, and plays an important role in the regulation of nitrogen assimilation and metabolism. This chain is Bifunctional uridylyltransferase/uridylyl-removing enzyme, found in Ectopseudomonas mendocina (strain ymp) (Pseudomonas mendocina).